We begin with the raw amino-acid sequence, 401 residues long: Phosphoglycerate kinase (401 aa).

Residues 21–23 (DFN), R36, 59–62 (HLGR), R119, and R160 contribute to the substrate site. ATP is bound by residues K212, E330, and 357–360 (GGDS).

The protein belongs to the phosphoglycerate kinase family. As to quaternary structure, monomer.

It is found in the cytoplasm. The enzyme catalyses (2R)-3-phosphoglycerate + ATP = (2R)-3-phospho-glyceroyl phosphate + ADP. The protein operates within carbohydrate degradation; glycolysis; pyruvate from D-glyceraldehyde 3-phosphate: step 2/5. The sequence is that of Phosphoglycerate kinase from Limosilactobacillus reuteri subsp. reuteri (strain JCM 1112) (Lactobacillus reuteri).